The sequence spans 384 residues: Probable fructokinase-6, chloroplastic (384 aa).

Residues 1-46 (MALQATTTTFCFSGPTFRSTPHSLTSKRPISIKATTSSPSRLSNSR) constitute a chloroplast transit peptide. The tract at residues 34-61 (ATTSSPSRLSNSRSNLKGRALSSDGSTQ) is disordered. Residues 35–48 (TTSSPSRLSNSRSN) are compositionally biased toward low complexity.

The protein belongs to the carbohydrate kinase PfkB family.

The protein resides in the plastid. Its subcellular location is the chloroplast. It catalyses the reaction D-fructose + ATP = D-fructose 6-phosphate + ADP + H(+). It participates in glycan biosynthesis; starch biosynthesis. In terms of biological role, may play an important role in maintaining the flux of carbon towards starch formation. The sequence is that of Probable fructokinase-6, chloroplastic from Arabidopsis thaliana (Mouse-ear cress).